A 333-amino-acid chain; its full sequence is Ribosomal protein L11 methyltransferase (333 aa).

S-adenosyl-L-methionine-binding residues include Thr181, Gly202, Asp224, and Asn268.

It belongs to the methyltransferase superfamily. PrmA family.

The protein localises to the cytoplasm. The enzyme catalyses L-lysyl-[protein] + 3 S-adenosyl-L-methionine = N(6),N(6),N(6)-trimethyl-L-lysyl-[protein] + 3 S-adenosyl-L-homocysteine + 3 H(+). Its function is as follows. Methylates ribosomal protein L11. This chain is Ribosomal protein L11 methyltransferase, found in Helicobacter pylori (strain ATCC 700392 / 26695) (Campylobacter pylori).